Reading from the N-terminus, the 83-residue chain is Acylphosphatase (83 aa).

In terms of domain architecture, Acylphosphatase-like spans 1-83 (MIEGRVQRVG…TGDDWFEVRY (83 aa)). Catalysis depends on residues Arg12 and Asn30.

This sequence belongs to the acylphosphatase family.

The enzyme catalyses an acyl phosphate + H2O = a carboxylate + phosphate + H(+). The polypeptide is Acylphosphatase (acyP) (Synechococcus sp. (strain CC9605)).